The chain runs to 284 residues: 4-hydroxybenzoate octaprenyltransferase (284 aa).

7 consecutive transmembrane segments (helical) span residues 33–53 (VIAA…LGVF), 93–113 (IGLF…MNPL), 136–156 (HIPQ…AWAA), 159–179 (GELP…TIAY), 209–229 (LIIG…GQFY), 235–252 (YYWT…QQHL), and 264–284 (AFLN…VAFW).

Belongs to the UbiA prenyltransferase family. It depends on Mg(2+) as a cofactor.

Its subcellular location is the cell inner membrane. The enzyme catalyses all-trans-octaprenyl diphosphate + 4-hydroxybenzoate = 4-hydroxy-3-(all-trans-octaprenyl)benzoate + diphosphate. It functions in the pathway cofactor biosynthesis; ubiquinone biosynthesis. In terms of biological role, catalyzes the prenylation of para-hydroxybenzoate (PHB) with an all-trans polyprenyl group. Mediates the second step in the final reaction sequence of ubiquinone-8 (UQ-8) biosynthesis, which is the condensation of the polyisoprenoid side chain with PHB, generating the first membrane-bound Q intermediate 3-octaprenyl-4-hydroxybenzoate. This chain is 4-hydroxybenzoate octaprenyltransferase, found in Vibrio parahaemolyticus serotype O3:K6 (strain RIMD 2210633).